A 128-amino-acid chain; its full sequence is Probable 4-amino-4-deoxy-L-arabinose-phosphoundecaprenol flippase subunit ArnF (128 aa).

Over 1 to 10 (MKGYLWGGAS) the chain is Cytoplasmic. A helical transmembrane segment spans residues 11–31 (VVLVTVAQLVLKWGMMNIPLL). Residues 32–47 (SLADINVQFLTMYFVQ) are Periplasmic-facing. A helical transmembrane segment spans residues 48–68 (LASVMCGLMGYALSMLCWFFA). The Cytoplasmic segment spans residues 69-77 (LRYLPLNRA). The chain crosses the membrane as a helical span at residues 78–98 (YPLLSLSYALVYLGAVLLPWF). The Periplasmic segment spans residues 99 to 101 (NEP). The helical transmembrane segment at 102-122 (ATLLKTLGAGFILLGIWLINI) threads the bilayer. Over 123-128 (KPIKAS) the chain is Cytoplasmic.

It belongs to the ArnF family. As to quaternary structure, heterodimer of ArnE and ArnF.

It localises to the cell inner membrane. The protein operates within bacterial outer membrane biogenesis; lipopolysaccharide biosynthesis. Its function is as follows. Translocates 4-amino-4-deoxy-L-arabinose-phosphoundecaprenol (alpha-L-Ara4N-phosphoundecaprenol) from the cytoplasmic to the periplasmic side of the inner membrane. This is Probable 4-amino-4-deoxy-L-arabinose-phosphoundecaprenol flippase subunit ArnF from Yersinia pseudotuberculosis serotype O:1b (strain IP 31758).